We begin with the raw amino-acid sequence, 501 residues long: Probable malate:quinone oxidoreductase (501 aa).

Belongs to the MQO family. It depends on FAD as a cofactor.

The catalysed reaction is (S)-malate + a quinone = a quinol + oxaloacetate. It functions in the pathway carbohydrate metabolism; tricarboxylic acid cycle; oxaloacetate from (S)-malate (quinone route): step 1/1. This chain is Probable malate:quinone oxidoreductase, found in Mycolicibacterium paratuberculosis (strain ATCC BAA-968 / K-10) (Mycobacterium paratuberculosis).